Reading from the N-terminus, the 514-residue chain is M-phase inducer phosphatase 1 (514 aa).

Positions 73–83 (MGSSESTDSGF) match the Phosphodegron motif. Serine 75 bears the Phosphoserine; by CHEK1 mark. Phosphoserine; by NEK11 is present on residues serine 78, serine 81, and serine 87. Serine 106 carries the post-translational modification Phosphoserine. Phosphoserine; by CHEK1 and CHEK2 is present on serine 123. Residues 140–142 (KEN) carry the KEN box motif. Serine 172 carries the phosphoserine; by CHEK1 modification. A disordered region spans residues 256 to 308 (PCGSSTRAVLKRADRSHEEPPRGTKRRKSVPSPVKAKADVPEPAQLPSQSLSL). Positions 266-277 (KRADRSHEEPPR) are enriched in basic and acidic residues. Phosphoserine; by CHEK1 and CHEK2 is present on residues serine 271 and serine 284. Serine 311 is subject to Phosphoserine. Positions 366–472 (LIKEFVIIDC…FFLKCQSHCE (107 aa)) constitute a Rhodanese domain. Residue cysteine 421 is part of the active site. Threonine 497 is subject to Phosphothreonine; by CHEK1. Phosphoserine; by PLK3 occurs at positions 503 and 509.

Belongs to the MPI phosphatase family. In terms of assembly, interacts with CCNB1/cyclin B1. Interacts with YWHAE/14-3-3 epsilon when phosphorylated. Interacts with CUL1 specifically when CUL1 is neddylated and active. Interacts with BTRC/BTRCP1 and FBXW11/BTRCP2. Interactions with CUL1, BTRC and FBXW11 are enhanced upon DNA damage. Interacts with CHEK2; mediates CDC25A phosphorylation and degradation in response to infrared-induced DNA damages. Interacts with HSP90AB1; prevents heat shock-mediated CDC25A degradation and contributes to cell cycle progression. Post-translationally, phosphorylated by CHEK1 on Ser-75, Ser-123, Ser-172, Ser-271, Ser-284 and Thr-497 during checkpoint mediated cell cycle arrest. Also phosphorylated by CHEK2 on Ser-123, Ser-271, and Ser-284 during checkpoint mediated cell cycle arrest. Phosphorylation on Ser-172 and Thr-497 creates binding sites for YWHAE/14-3-3 epsilon which inhibits CDC25A. Phosphorylation on Ser-75, Ser-123, Ser-172, Ser-271 and Ser-284 may also promote ubiquitin-dependent proteolysis of CDC25A by the SCF complex. Phosphorylation of CDC25A at Ser-75 by CHEK1 primes it for subsequent phosphorylation at Ser-75, Ser-81 and Ser-87 by NEK11. Phosphorylation by NEK11 is required for BTRC-mediated polyubiquitination and degradation. Phosphorylation by PIM1 leads to an increase in phosphatase activity. Phosphorylated by PLK3 following DNA damage, leading to promote its ubiquitination and degradation. In terms of processing, ubiquitinated by the anaphase promoting complex/cyclosome (APC/C) ubiquitin ligase complex that contains FZR1/CDH1 during G1 phase leading to its degradation by the proteasome. Ubiquitinated by a SCF complex containing BTRC and FBXW11 during S phase leading to its degradation by the proteasome. Deubiquitination by USP17L2/DUB3 leads to its stabilization. In terms of tissue distribution, ubiquitously expressed in most developing tissue. High levels in the testis and lower levels in the ovary, particularly in germ cells. Lower levels also in kidney, liver, heart and muscle.

The enzyme catalyses O-phospho-L-tyrosyl-[protein] + H2O = L-tyrosyl-[protein] + phosphate. Its activity is regulated as follows. Stimulated by B-type cyclins. Stimulated by PIM1-mediated phosphorylation. Its function is as follows. Tyrosine protein phosphatase which functions as a dosage-dependent inducer of mitotic progression. Directly dephosphorylates CDK1 and stimulates its kinase activity. Also dephosphorylates CDK2 in complex with cyclin-E, in vitro. This chain is M-phase inducer phosphatase 1 (Cdc25a), found in Mus musculus (Mouse).